A 117-amino-acid polypeptide reads, in one-letter code: DNA-binding protein DDB_G0278111 (117 aa).

The tract at residues 1–40 (MSSEKEIQQQLSQMQGQGFDPEAQQRQEAQRQEANERRQG) is disordered. Residues 8–22 (QQQLSQMQGQGFDPE) are compositionally biased toward low complexity. Residues 23 to 39 (AQQRQEAQRQEANERRQ) show a composition bias toward basic and acidic residues.

This sequence belongs to the PDCD5 family.

The polypeptide is DNA-binding protein DDB_G0278111 (Dictyostelium discoideum (Social amoeba)).